The sequence spans 379 residues: Cytochrome b (379 aa).

4 helical membrane-spanning segments follow: residues 33 to 53, 77 to 98, 113 to 133, and 178 to 198; these read FGSL…FLAM, WLIR…FIHV, WNIG…GYVL, and FFAF…VHLL. Residues His83 and His97 each coordinate heme b. 2 residues coordinate heme b: His182 and His196. His201 is a binding site for a ubiquinone. The next 4 membrane-spanning stretches (helical) occupy residues 226–246, 288–308, 320–340, and 347–367; these read IKDL…ALFF, LGGV…PLLN, VTQT…WIGG, and FTMI…VLMP.

The protein belongs to the cytochrome b family. As to quaternary structure, the cytochrome bc1 complex contains 11 subunits: 3 respiratory subunits (MT-CYB, CYC1 and UQCRFS1), 2 core proteins (UQCRC1 and UQCRC2) and 6 low-molecular weight proteins (UQCRH/QCR6, UQCRB/QCR7, UQCRQ/QCR8, UQCR10/QCR9, UQCR11/QCR10 and a cleavage product of UQCRFS1). This cytochrome bc1 complex then forms a dimer. Requires heme b as cofactor.

The protein localises to the mitochondrion inner membrane. Its function is as follows. Component of the ubiquinol-cytochrome c reductase complex (complex III or cytochrome b-c1 complex) that is part of the mitochondrial respiratory chain. The b-c1 complex mediates electron transfer from ubiquinol to cytochrome c. Contributes to the generation of a proton gradient across the mitochondrial membrane that is then used for ATP synthesis. The chain is Cytochrome b (MT-CYB) from Akodon iniscatus (Intelligent grass mouse).